We begin with the raw amino-acid sequence, 547 residues long: CAP-Gly domain-containing linker protein 3 (547 aa).

The tract at residues 1–49 (MTKTDPAPMAPPPRGEEEEEEEEDEPVPEAPSPTQERRQKPVVHPSAPA) is disordered. Residues 16-27 (EEEEEEEEDEPV) are compositionally biased toward acidic residues. 3 ANK repeats span residues 117–158 (TDMT…LRSR), 160–191 (TNMN…VVNS), and 197–229 (NHGS…LRNR). Positions 314–356 (GTTEFASGQWVGVELDEPEGKNDGSVGGVRYFICPPKQGLFAS) constitute a CAP-Gly 1 domain. The interval 365 to 413 (DAPPSSVTSTPRTPRMDFSRVTGKGRREHKGKKKSPSSPSLGSLQQREG) is disordered. A compositionally biased stretch (low complexity) spans 367 to 377 (PPSSVTSTPRT). Residue T374 is modified to Phosphothreonine. Residues 387 to 399 (GKGRREHKGKKKS) show a composition bias toward basic residues. S399 and S401 each carry phosphoserine. The CAP-Gly 2 domain maps to 436 to 478 (GKTDFAPGYWYGIELDQPTGKHDGSVFGVRYFTCAPRHGVFAP). The tract at residues 488–547 (STDPPGDSVGAKKVHQVTMTQPKRTFTTVRTPKDIASENSISRLLFCCWFPWMLRAEMQS) is goLD. Residues C534 and C535 are each lipidated (S-palmitoyl cysteine).

As to quaternary structure, homodimer. Interacts with AKT1 and AKT2; when AKT1 and AKT2 are phosphorylated and activated, affinity is higher for AKT2. Interacts with ZDHHC13 (via ANK repeats). Interacts with ZDHHC17 (via ANK repeats). In terms of processing, palmitoylation by ZDHHC17 regulates association with the plasma membrane.

Its subcellular location is the cell membrane. It localises to the cytoplasm. It is found in the golgi apparatus. The protein resides in the golgi stack. Functions as a cytoplasmic linker protein. Involved in TGN-endosome dynamics. May modulate the cellular compartmentalization of AKT kinase family and promote its cell membrane localization, thereby playing a role in glucose transport in adipocytes. The polypeptide is CAP-Gly domain-containing linker protein 3 (Clip3) (Mus musculus (Mouse)).